Consider the following 228-residue polypeptide: Nuclear phosphoprotein UL3 homolog (228 aa).

It belongs to the alphaherpesvirinae HHV-1 UL3 family. Post-translationally, phosphorylated.

The protein localises to the host nucleus. This chain is Nuclear phosphoprotein UL3 homolog (MDV015), found in Gallus gallus (Chicken).